The primary structure comprises 354 residues: Methylthioribose-1-phosphate isomerase (354 aa).

Residues 45 to 47 (RGA), Arg87, and Gln204 each bind substrate. The active-site Proton donor is the Asp245. Substrate is bound at residue 255–256 (NK).

Belongs to the eIF-2B alpha/beta/delta subunits family. MtnA subfamily.

It catalyses the reaction 5-(methylsulfanyl)-alpha-D-ribose 1-phosphate = 5-(methylsulfanyl)-D-ribulose 1-phosphate. Its pathway is amino-acid biosynthesis; L-methionine biosynthesis via salvage pathway; L-methionine from S-methyl-5-thio-alpha-D-ribose 1-phosphate: step 1/6. In terms of biological role, catalyzes the interconversion of methylthioribose-1-phosphate (MTR-1-P) into methylthioribulose-1-phosphate (MTRu-1-P). This is Methylthioribose-1-phosphate isomerase from Chlorobaculum tepidum (strain ATCC 49652 / DSM 12025 / NBRC 103806 / TLS) (Chlorobium tepidum).